A 233-amino-acid chain; its full sequence is Phosphoglycolate phosphatase (233 aa).

Aspartate 9 acts as the Nucleophile in catalysis. Aspartate 9 and aspartate 11 together coordinate Mg(2+). Residue lysine 154 participates in substrate binding. Aspartate 177 and aspartate 181 together coordinate Mg(2+).

It belongs to the archaeal SPP-like hydrolase family. Mg(2+) is required as a cofactor.

The catalysed reaction is 2-phosphoglycolate + H2O = glycolate + phosphate. Functionally, catalyzes the dephosphorylation of 2-phosphoglycolate. The chain is Phosphoglycolate phosphatase from Pyrococcus abyssi (strain GE5 / Orsay).